Consider the following 470-residue polypeptide: MTPFMTEDFLLDTEFARRLYHDYAKDQPIFDYHCHLPPQQVAENYRFKNLYDIWLKGDHYKWRAMRTNGVPERLCTGDASDREKFDAWAATVPHTIGNPLYHWTHLELRRPFGITGKLLSPSTADEIWDQCNDLLAQDAFSARGIMKQMNVKMVGTTDDPIDSLEHHAVVAKDTSFDIKVLPSWRPDKAFNIEQATFNDYMAKLGEVSDTDIRRFADLQSALTKRLDHFAAHGCKVSDHALDVVLFAEATDAELDAILARRLAGETLSAHEVAQFKTAVLVFLGAEYARRGWVQQYHIGALRNNNLRQFKLLGPDVGFDSINDRPMAEELSKLLSKQNEENLLPKTILYCLNPRDNEVLGTMIGNFQGEGMPGKMQFGSGWWFNDQKDGMERQMTQLAQLGLLSRFVGMLTDSRSFLSYTRHEYFRRILCQMIGRWVAAGEAPADIALLGEMVKNICFNNARDYFAIELN.

The protein belongs to the metallo-dependent hydrolases superfamily. Uronate isomerase family.

The catalysed reaction is D-glucuronate = D-fructuronate. The enzyme catalyses aldehydo-D-galacturonate = keto-D-tagaturonate. The protein operates within carbohydrate metabolism; pentose and glucuronate interconversion. In Klebsiella pneumoniae (strain 342), this protein is Uronate isomerase.